Here is a 245-residue protein sequence, read N- to C-terminus: 1-(5-phosphoribosyl)-5-[(5-phosphoribosylamino)methylideneamino] imidazole-4-carboxamide isomerase (245 aa).

The active-site Proton acceptor is the Asp7. Asp129 serves as the catalytic Proton donor.

Belongs to the HisA/HisF family.

The protein localises to the cytoplasm. The enzyme catalyses 1-(5-phospho-beta-D-ribosyl)-5-[(5-phospho-beta-D-ribosylamino)methylideneamino]imidazole-4-carboxamide = 5-[(5-phospho-1-deoxy-D-ribulos-1-ylimino)methylamino]-1-(5-phospho-beta-D-ribosyl)imidazole-4-carboxamide. It participates in amino-acid biosynthesis; L-histidine biosynthesis; L-histidine from 5-phospho-alpha-D-ribose 1-diphosphate: step 4/9. This chain is 1-(5-phosphoribosyl)-5-[(5-phosphoribosylamino)methylideneamino] imidazole-4-carboxamide isomerase, found in Salmonella enteritidis PT4 (strain P125109).